A 149-amino-acid polypeptide reads, in one-letter code: F420H(2)-dependent quinone reductase MT1299 (149 aa).

Residues Ala48 to Thr50, Arg54 to Thr59, Val70 to Lys73, Gly81 to Asn85, and Tyr130 each bind coenzyme F420-(gamma-Glu)n.

This sequence belongs to the F420H(2)-dependent quinone reductase family.

The protein resides in the cell membrane. It catalyses the reaction oxidized coenzyme F420-(gamma-L-Glu)(n) + a quinol + H(+) = reduced coenzyme F420-(gamma-L-Glu)(n) + a quinone. Functionally, involved in a F420-dependent anti-oxidant mechanism that protects M.tuberculosis against oxidative stress and bactericidal agents. Catalyzes the F420H(2)-dependent two-electron reduction of quinones to dihydroquinones, thereby preventing the formation of cytotoxic semiquinones obtained by the one-electron reduction pathway. In vitro, catalyzes the reduction of menadione to menadiol; since menaquinone is the sole quinone electron carrier in the respiratory chain in M.tuberculosis, the physiological electron acceptor for Fqr-mediated F420H(2) oxidation is therefore likely to be the endogenous menaquinone found in the membrane fraction of M.tuberculosis. The chain is F420H(2)-dependent quinone reductase MT1299 from Mycobacterium tuberculosis (strain CDC 1551 / Oshkosh).